Reading from the N-terminus, the 522-residue chain is Lysine--tRNA ligase (522 aa).

Residues 44-52 (PSGLPHIGT) carry the 'HIGH' region motif. The 'KMSKS' region signature appears at 290–294 (KISKS). Lys293 serves as a coordination point for ATP.

It belongs to the class-I aminoacyl-tRNA synthetase family.

It is found in the cytoplasm. The enzyme catalyses tRNA(Lys) + L-lysine + ATP = L-lysyl-tRNA(Lys) + AMP + diphosphate. This Rickettsia bellii (strain RML369-C) protein is Lysine--tRNA ligase.